A 226-amino-acid chain; its full sequence is Transmembrane protein 98 (226 aa).

Over 1-3 (MET) the chain is Cytoplasmic. The interval 1-88 (METVVIVAIG…ENEDWIEDAS (88 aa)) is required for interaction with MYRF. A helical membrane pass occupies residues 4 to 24 (VVIVAIGVLATIFLASFAALV). The Extracellular portion of the chain corresponds to 25–226 (LVCRQRYCRP…EGFLQEQSAI (202 aa)). Residues 207–226 (SEPDKGLPGPEGFLQEQSAI) are disordered.

The protein belongs to the TMEM98 family. In terms of assembly, interacts (via N-terminal region) with MYRF; the interaction inhibits MYRF self-cleavage. Widely expressed with high expression in the ovary, pancreas and prostate. Expressed in the eye, particularly in corneal endothelium, iris, ciliary body, sclera, optic nerve, optic nerve head, and retina. Expressed by activated peripheral blood mononuclear cells.

The protein localises to the cell membrane. The protein resides in the secreted. It is found in the extracellular exosome. It localises to the endoplasmic reticulum membrane. Its function is as follows. Functions as a negative regulator of MYRF in oligodendrocyte differentiation and myelination. Interacts with the C-terminal of MYRF inhibiting MYRF self-cleavage and N-fragment nuclear translocation. The secreted form promotes differentiation of T helper 1 cells (Th1). This Homo sapiens (Human) protein is Transmembrane protein 98 (TMEM98).